A 176-amino-acid polypeptide reads, in one-letter code: Large ribosomal subunit protein bL12m (176 aa).

Belongs to the bacterial ribosomal protein bL12 family. In terms of assembly, component of the mitochondrial large ribosomal subunit (mt-LSU). Mature N.crassa 74S mitochondrial ribosomes consist of a small (37S) and a large (54S) subunit. The 37S small subunit contains a 16S ribosomal RNA (16S mt-rRNA) and 32 different proteins. The 54S large subunit contains a 23S rRNA (23S mt-rRNA) and 42 different proteins.

It localises to the mitochondrion. Component of the mitochondrial ribosome (mitoribosome), a dedicated translation machinery responsible for the synthesis of mitochondrial genome-encoded proteins, including at least some of the essential transmembrane subunits of the mitochondrial respiratory chain. The mitoribosomes are attached to the mitochondrial inner membrane and translation products are cotranslationally integrated into the membrane. The chain is Large ribosomal subunit protein bL12m (mrpl12) from Neurospora crassa (strain ATCC 24698 / 74-OR23-1A / CBS 708.71 / DSM 1257 / FGSC 987).